Consider the following 331-residue polypeptide: Eukaryotic translation initiation factor 2 subunit 2 (331 aa).

Disordered regions lie at residues 1 to 75 (MSGD…DLNF) and 97 to 120 (AIKD…LDIM). Ser2 is modified (N-acetylserine). Phosphoserine occurs at positions 2 and 13. Residues 13–22 (SKKKKKKKKP) show a composition bias toward basic residues. A Phosphothreonine modification is found at Thr36. The span at 40–51 (ETKEVEPEPTEE) shows a compositional bias: basic and acidic residues. Ser67 bears the Phosphoserine mark. Lys102 is covalently cross-linked (Glycyl lysine isopeptide (Lys-Gly) (interchain with G-Cter in SUMO2)). Residue Ser105 is modified to Phosphoserine. Positions 106–118 (DAQEPAEPEDDLD) are enriched in acidic residues. Phosphoserine occurs at positions 158 and 216. An N6-acetyllysine mark is found at Lys263 and Lys291. The C4-type zinc finger occupies 279 to 303 (CHTCRSPDTILQKDTRLYFLQCETC).

It belongs to the eIF-2-beta/eIF-5 family. In terms of assembly, eukaryotic translation initiation factor 2 eIF2 is a heterotrimeric complex composed of an alpha (EIF2S1), a beta (EIF2S2) and a gamma (EIF2S3) chain. eIF2 is member of the 43S pre-initiation complex (43S PIC). eIF2 forms a complex with at least CELF1/CUGBP1, CALR, CALR3, EIF2S1, EIF2S2, HSP90B1 and HSPA5. Interacts with BZW2/5MP1. Interacts with EIF5.

Its subcellular location is the cytoplasm. The protein localises to the cytosol. Its function is as follows. Component of the eIF2 complex that functions in the early steps of protein synthesis by forming a ternary complex with GTP and initiator tRNA. This complex binds to a 40S ribosomal subunit, followed by mRNA binding to form the 43S pre-initiation complex (43S PIC). Junction of the 60S ribosomal subunit to form the 80S initiation complex is preceded by hydrolysis of the GTP bound to eIF2 and release of an eIF2-GDP binary complex. In order for eIF2 to recycle and catalyze another round of initiation, the GDP bound to eIF2 must exchange with GTP by way of a reaction catalyzed by eIF2B. The sequence is that of Eukaryotic translation initiation factor 2 subunit 2 (Eif2s2) from Mus musculus (Mouse).